A 674-amino-acid chain; its full sequence is Glutaminase kidney isoform, mitochondrial (674 aa).

The N-terminal 54 residues, 1–54 (MMRLRGSAMLRELLLRPPAAVGAVLRRAQPLGTLCRRPRGGSRPTAGLVAAARL), are a transit peptide targeting the mitochondrion. A disordered region spans residues 56–123 (PWWGGGGRAK…PGETDAFGNS (68 aa)). Residues 58 to 71 (WGGGGRAKGPGAGG) show a composition bias toward gly residues. The segment covering 89-101 (PPQQQQQQQQQPG) has biased composition (low complexity). 2 positions are modified to N6-succinyllysine: K135 and K169. Substrate is bound at residue S291. An N6-acetyllysine modification is found at K316. Residues 320–327 (GLRFNKLF) form a highly mobile activation loop region. Substrate is bound by residues N340, E386, N393, Y419, Y471, and V489. ANK repeat units follow at residues 590-619 (DSRTALHVAAAEGHVEVVKFLLEACKVNPF) and 624-653 (WNNTPMDEALHFGHHDVFKILQEYQVQYTP). The disordered stretch occupies residues 652–674 (TPQGDSDDGKGNQTVHKNLDGLL). A Phosphoserine modification is found at S657.

Belongs to the glutaminase family. In terms of assembly, homotetramer, dimer of dimers. The tetramers can assemble into rod-like oligomers (in vitro), but the physiological significance of this is not clear. Interacts with RAF1 and MAP2K2. Interacts with ATCAY; the interaction is direct and may control GLS localization, negatively regulating its activity. Post-translationally, synthesized as a 74-kDa cytosolic precursor which is proteolytically processed by the mitochondrial-processing peptidase (MPP) via a 72-kDa intermediate to yield the mature mitochondrial 68- and 65-kDa subunits.

Its subcellular location is the mitochondrion. It localises to the cytoplasm. The protein resides in the cytosol. It is found in the mitochondrion matrix. It catalyses the reaction L-glutamine + H2O = L-glutamate + NH4(+). With respect to regulation, isoform 1 and isoform 2 are activated by phosphate, due to increased affinity for glutamine. At phosphate concentrations above 10 mM, isoform 2 is more efficient than isoform 1. Catalyzes the first reaction in the primary pathway for the renal catabolism of glutamine. Plays a role in maintaining acid-base homeostasis. Regulates the levels of the neurotransmitter glutamate, the main excitatory neurotransmitter in the brain. The chain is Glutaminase kidney isoform, mitochondrial (Gls) from Mus musculus (Mouse).